The primary structure comprises 101 residues: NAD(P)H-quinone oxidoreductase subunit 4L, chloroplastic (101 aa).

3 helical membrane-spanning segments follow: residues 2–22 (MLEH…YGLI), 32–52 (MCLE…SDFF), and 61–81 (IFSI…PAIV).

The protein belongs to the complex I subunit 4L family. In terms of assembly, NDH is composed of at least 16 different subunits, 5 of which are encoded in the nucleus.

The protein localises to the plastid. It localises to the chloroplast thylakoid membrane. It catalyses the reaction a plastoquinone + NADH + (n+1) H(+)(in) = a plastoquinol + NAD(+) + n H(+)(out). It carries out the reaction a plastoquinone + NADPH + (n+1) H(+)(in) = a plastoquinol + NADP(+) + n H(+)(out). Functionally, NDH shuttles electrons from NAD(P)H:plastoquinone, via FMN and iron-sulfur (Fe-S) centers, to quinones in the photosynthetic chain and possibly in a chloroplast respiratory chain. The immediate electron acceptor for the enzyme in this species is believed to be plastoquinone. Couples the redox reaction to proton translocation, and thus conserves the redox energy in a proton gradient. The polypeptide is NAD(P)H-quinone oxidoreductase subunit 4L, chloroplastic (Manihot esculenta (Cassava)).